Reading from the N-terminus, the 245-residue chain is tRNA1(Val) (adenine(37)-N6)-methyltransferase (245 aa).

The protein belongs to the methyltransferase superfamily. tRNA (adenine-N(6)-)-methyltransferase family.

The protein localises to the cytoplasm. It catalyses the reaction adenosine(37) in tRNA1(Val) + S-adenosyl-L-methionine = N(6)-methyladenosine(37) in tRNA1(Val) + S-adenosyl-L-homocysteine + H(+). Its function is as follows. Specifically methylates the adenine in position 37 of tRNA(1)(Val) (anticodon cmo5UAC). The sequence is that of tRNA1(Val) (adenine(37)-N6)-methyltransferase from Escherichia coli O157:H7 (strain EC4115 / EHEC).